Reading from the N-terminus, the 1311-residue chain is DENN domain-containing protein 5B (1311 aa).

Residues 53-270 (ATAAGENFDQ…EVPLPASGRS (218 aa)) form the uDENN domain. The span at 154–165 (QAEHNTSAQNCT) shows a compositional bias: polar residues. Residues 154–201 (QAEHNTSAQNCTSSSSSSSSSSSSSSMDSLSSSLDDVDSPSAHGGRRT) are disordered. The span at 166-187 (SSSSSSSSSSSSSSMDSLSSSL) shows a compositional bias: low complexity. One can recognise a cDENN domain in the interval 289-452 (ELPLADFPLA…AVMSLQTSVL (164 aa)). The dDENN domain occupies 454–619 (KELKSTSLRE…DNKIMSQWEE (166 aa)). In terms of domain architecture, RUN 1 spans 809-969 (LEENTLIASL…DYFCFTSVFT (161 aa)). The segment at 854–874 (EQQLESPVSNGQERRKTESSV) is disordered. Residues 962-982 (FCFTSVFTTIMIPYRAVIIPI) traverse the membrane as a helical segment. The PLAT domain maps to 973 to 1081 (IPYRAVIIPI…DDGSLERVLI (109 aa)). One can recognise an RUN 2 domain in the interval 1155 to 1306 (TVLLCGEGGL…FPITLETSLT (152 aa)).

This sequence belongs to the RAB6IP1 family.

It localises to the membrane. Its function is as follows. Guanine nucleotide exchange factor (GEF) which may activate the small GTPases Rab. May promote the exchange of GDP to GTP, converting inactive GDP-bound Rab proteins into their active GTP-bound form. In Danio rerio (Zebrafish), this protein is DENN domain-containing protein 5B (dennd5b).